The chain runs to 317 residues: MPADTRPAAIVLMGPTASGKSQLAIDIAKRWGGEVISVDSVLVYRGLDIGTAKPNAAMRASVPHHLIDICEPWETYSAADFAHDARAAIDMIVRRGALPILTGGTGLYFRALLAGLSDMPPAHPEIRAMIAAEAKRDSWATLHTRLAEVDAITAARIHATDPQRIQRALEVYLVSGRSMSDWQNQPPKQRLPLRVLKLVLAPTHRKVLHFRIAQRFKAMLDNGLLAEVNALRTHPSIHAMARPLDLPAMRAVGYRQCWEHLDGMYTAEMLYQRSVAATRQLAKRQLTWLRGELDALWFDPEHDQSRIEKVMEAFLNR.

14 to 21 serves as a coordination point for ATP; the sequence is GPTASGKS. A substrate-binding site is contributed by 16 to 21; sequence TASGKS. Interaction with substrate tRNA stretches follow at residues 39–42 and 163–167; these read DSVL and QRIQR.

This sequence belongs to the IPP transferase family. As to quaternary structure, monomer. Requires Mg(2+) as cofactor.

It catalyses the reaction adenosine(37) in tRNA + dimethylallyl diphosphate = N(6)-dimethylallyladenosine(37) in tRNA + diphosphate. Its function is as follows. Catalyzes the transfer of a dimethylallyl group onto the adenine at position 37 in tRNAs that read codons beginning with uridine, leading to the formation of N6-(dimethylallyl)adenosine (i(6)A). This Xylella fastidiosa (strain M12) protein is tRNA dimethylallyltransferase.